The primary structure comprises 361 residues: Pseudouridine-5'-phosphate glycosidase (361 aa).

Glutamate 27 (proton donor) is an active-site residue. Substrate contacts are provided by lysine 88 and valine 108. Aspartate 140 serves as a coordination point for Mn(2+). Residue 142–144 participates in substrate binding; sequence SAD. Lysine 161 functions as the Nucleophile in the catalytic mechanism. The segment at 306–361 is disordered; it reads DRSPTDPAAPDPTAPDPAAPDPTAPDPAAPDSAAPDLAGPDPSAPDPAAVARAHRP. Positions 312–333 are enriched in pro residues; it reads PAAPDPTAPDPAAPDPTAPDPA. A compositionally biased stretch (low complexity) spans 334–354; it reads APDSAAPDLAGPDPSAPDPAA.

Belongs to the pseudouridine-5'-phosphate glycosidase family. In terms of assembly, homotrimer. The cofactor is Mn(2+).

The enzyme catalyses D-ribose 5-phosphate + uracil = psi-UMP + H2O. Its function is as follows. Catalyzes the reversible cleavage of pseudouridine 5'-phosphate (PsiMP) to ribose 5-phosphate and uracil. Functions biologically in the cleavage direction, as part of a pseudouridine degradation pathway. This chain is Pseudouridine-5'-phosphate glycosidase, found in Frankia alni (strain DSM 45986 / CECT 9034 / ACN14a).